The chain runs to 323 residues: Zinc finger C2HC domain-containing protein 1A (323 aa).

A C2HC/C3H-type 1 zinc finger spans residues Glu-7 to Lys-36. Zn(2+)-binding residues include Cys-11, Cys-14, His-26, and Cys-30. The interval Val-35–Lys-75 is disordered. Over residues Thr-40–Gly-50 the composition is skewed to basic and acidic residues. Residues Asp-110–Arg-139 form a C2HC/C3H-type 2 zinc finger. Residues Cys-114, Cys-117, His-129, and Cys-133 each coordinate Zn(2+). A disordered region spans residues Ala-138–Asp-273. Polar residues predominate over residues Lys-208–Gln-226.

The protein belongs to the ZC2HC1 family. Zn(2+) is required as a cofactor.

This is Zinc finger C2HC domain-containing protein 1A (zc2hc1a) from Xenopus laevis (African clawed frog).